Consider the following 228-residue polypeptide: tRNA (guanine-N(1)-)-methyltransferase (228 aa).

S-adenosyl-L-methionine contacts are provided by residues Gly108 and 127-132; that span reads VGDFIL.

The protein belongs to the RNA methyltransferase TrmD family. As to quaternary structure, homodimer.

It localises to the cytoplasm. It catalyses the reaction guanosine(37) in tRNA + S-adenosyl-L-methionine = N(1)-methylguanosine(37) in tRNA + S-adenosyl-L-homocysteine + H(+). Functionally, specifically methylates guanosine-37 in various tRNAs. This chain is tRNA (guanine-N(1)-)-methyltransferase, found in Metamycoplasma arthritidis (strain 158L3-1) (Mycoplasma arthritidis).